Consider the following 273-residue polypeptide: Giardin subunit beta (273 aa).

The tract at residues Met1–Asp19 is nonhelical region. The tract at residues Leu20–Gln273 is rod. Coiled-coil stretches lie at residues Asp123–Leu175 and Asn211–Gln263.

The protein belongs to the SF-assemblin family. Interacts with BOP1 (via C-terminal WD repeats).

It is found in the cytoplasm. It localises to the cytoskeleton. Giardins are involved in parasite attachment to the intestinal mucosa and in the cytoskeletal disassembly and reassembly that marks the transition from infectious trophozoite to transmissible cyst. They may interact with other cytoskeletal proteins such as microtubules in the microribbons or crossbridges, to maintain the integrity of the ventral disk. The chain is Giardin subunit beta from Giardia intestinalis (Giardia lamblia).